Here is an 876-residue protein sequence, read N- to C-terminus: Alanine--tRNA ligase (876 aa).

Zn(2+) is bound by residues histidine 564, histidine 568, cysteine 666, and histidine 670.

Belongs to the class-II aminoacyl-tRNA synthetase family. Homotetramer. The cofactor is Zn(2+).

The protein resides in the cytoplasm. The enzyme catalyses tRNA(Ala) + L-alanine + ATP = L-alanyl-tRNA(Ala) + AMP + diphosphate. In terms of biological role, catalyzes the attachment of alanine to tRNA(Ala) in a two-step reaction: alanine is first activated by ATP to form Ala-AMP and then transferred to the acceptor end of tRNA(Ala). Also edits incorrectly charged Ser-tRNA(Ala) and Gly-tRNA(Ala) via its editing domain. The protein is Alanine--tRNA ligase of Salmonella paratyphi A (strain ATCC 9150 / SARB42).